A 493-amino-acid chain; its full sequence is Phenmedipham hydrolase (493 aa).

Residue serine 188 is the Acyl-ester intermediate of the active site. Active-site charge relay system residues include glutamate 307 and histidine 402.

It belongs to the type-B carboxylesterase/lipase family. In terms of assembly, monomer.

In terms of biological role, may degrade the phenylcarbamate herbicides phenmedipham and desmedipham cometabolically by hydrolyzing their central carbamate linkages. Conveys resistance to the herbicide phenmedipham. In Pseudarthrobacter oxydans (Arthrobacter oxydans), this protein is Phenmedipham hydrolase (pcd).